Here is a 166-residue protein sequence, read N- to C-terminus: NAD(P)H-quinone oxidoreductase subunit I, chloroplastic (166 aa).

2 consecutive 4Fe-4S ferredoxin-type domains span residues 55–84 (GRIH…VDWK) and 95–124 (LNYS…MTEE). The [4Fe-4S] cluster site is built by cysteine 64, cysteine 67, cysteine 70, cysteine 74, cysteine 104, cysteine 107, cysteine 110, and cysteine 114.

The protein belongs to the complex I 23 kDa subunit family. In terms of assembly, NDH is composed of at least 16 different subunits, 5 of which are encoded in the nucleus. Requires [4Fe-4S] cluster as cofactor.

Its subcellular location is the plastid. The protein resides in the chloroplast thylakoid membrane. It carries out the reaction a plastoquinone + NADH + (n+1) H(+)(in) = a plastoquinol + NAD(+) + n H(+)(out). It catalyses the reaction a plastoquinone + NADPH + (n+1) H(+)(in) = a plastoquinol + NADP(+) + n H(+)(out). NDH shuttles electrons from NAD(P)H:plastoquinone, via FMN and iron-sulfur (Fe-S) centers, to quinones in the photosynthetic chain and possibly in a chloroplast respiratory chain. The immediate electron acceptor for the enzyme in this species is believed to be plastoquinone. Couples the redox reaction to proton translocation, and thus conserves the redox energy in a proton gradient. The protein is NAD(P)H-quinone oxidoreductase subunit I, chloroplastic of Picradeniopsis absinthifolia (Hairyseed bahia).